We begin with the raw amino-acid sequence, 337 residues long: 1-aminocyclopropane-1-carboxylate deaminase (337 aa).

Lys-50 carries the N6-(pyridoxal phosphate)lysine modification. Catalysis depends on Ser-77, which acts as the Nucleophile.

This sequence belongs to the ACC deaminase/D-cysteine desulfhydrase family. In terms of assembly, homotrimer. Pyridoxal 5'-phosphate serves as cofactor.

It carries out the reaction 1-aminocyclopropane-1-carboxylate + H2O = 2-oxobutanoate + NH4(+). Functionally, catalyzes a cyclopropane ring-opening reaction, the irreversible conversion of 1-aminocyclopropane-1-carboxylate (ACC) to ammonia and alpha-ketobutyrate. Allows growth on ACC as a nitrogen source. The chain is 1-aminocyclopropane-1-carboxylate deaminase from Allorhizobium ampelinum (strain ATCC BAA-846 / DSM 112012 / S4) (Agrobacterium vitis (strain S4)).